The primary structure comprises 126 residues: Protein ApaG (126 aa).

The 125-residue stretch at 2 to 126 (SALDNSIRVE…FRLATPGLLH (125 aa)) folds into the ApaG domain.

In Shewanella oneidensis (strain ATCC 700550 / JCM 31522 / CIP 106686 / LMG 19005 / NCIMB 14063 / MR-1), this protein is Protein ApaG.